Reading from the N-terminus, the 682-residue chain is MTAVSLSDGTAVLKTDPWLEPFSGALRERYAAYQKQRTIIEEHEGGLAEFSKGYKSMGFQIDKNGGVRYREWASNATEARLIGEFNNWSHTANPMTKSPFGVWECYVPPVSPGVCAIPHDSMVKISMTLPGGESIDRIPTWITRVTQDLNISPIYDGRFWNPPKEQQYQFKHGHSTRPVEGLKIYEAHVGISSPNMRVTTYKEFEVDVLPKIKQLGYNCIQMMAIMEHAYYASFGYQVTNFFAASSRFGTPEELKSLVDKAHELGLTVLLDVVHSHASKNILDGINMYDGSDHLYFHEGGRGRHDQWDSRLFNYGQHEVLRFLLSNLRFWMDIYMFDGFRFDGVTSMMYKHHGIGSGFSGGYHEYFGDSVDLEAMVYLMLANAMLHETYPHVVTIAEDVSGMPTLCRPVAEGGVGFDYRLSMAIPDMWIKLLKEYTDDQWEMGQIVHNLTNRRHLEKSVAYAESHDQALVGDKTLAFWLMDKEMYDFMSDLSPLTPIIDRGLALHKMIRFIVHTLGGEAYLNFEGNEFGHPEWMDFPREGNGNSFAHARRQFNLVDDKLLRYKYLYEFDVAMNWLEDKYKWLNSPQAYVSLKHEGDKMIVFERAGLLFIFNFHPTQSFTDYRVGVDTAGEYKVILTSDETRFGGHNRIDMGGRYFTTPMEWNGRKNWLQVYSPSRTVLVLGL.

(1,4-alpha-D-glucosyl)n is bound by residues Trp88 and Lys124. Asp342 (nucleophile) is an active-site residue. The active-site Proton donor is Glu397.

Belongs to the glycosyl hydrolase 13 family. GlgB subfamily.

Its subcellular location is the cytoplasm. The catalysed reaction is Transfers a segment of a (1-&gt;4)-alpha-D-glucan chain to a primary hydroxy group in a similar glucan chain.. The protein operates within glycan biosynthesis; glycogen biosynthesis. Its function is as follows. Glycogen-branching enzyme participates in the glycogen biosynthetic process along with glycogenin and glycogen synthase. Generates alpha-1,6-glucosidic branches from alpha-1,4-linked glucose chains, to increase solubility of the glycogen polymer. The polypeptide is 1,4-alpha-glucan-branching enzyme (GLC3) (Cryptococcus neoformans var. neoformans serotype D (strain B-3501A) (Filobasidiella neoformans)).